The primary structure comprises 119 residues: MRHYEIILLIHPDCSEKLPIMIEKFKKLVIGYKGRIHRLEDWGRRQLAYSINKLHKAHYFLMNIEVPSNCIQDLSNTFRYDDLVIRNIIMHVKKSVTEISPMLKSKEDKLDKKDRVVVS.

This sequence belongs to the bacterial ribosomal protein bS6 family.

Functionally, binds together with bS18 to 16S ribosomal RNA. This is Small ribosomal subunit protein bS6 from Buchnera aphidicola subsp. Baizongia pistaciae (strain Bp).